Consider the following 66-residue polypeptide: Large ribosomal subunit protein bL35 (66 aa).

Residues 19-45 (SGKVVAAQSTKRHGMTKRSKRSLRTRR) form a disordered region. Residues 28–45 (TKRHGMTKRSKRSLRTRR) are compositionally biased toward basic residues.

This sequence belongs to the bacterial ribosomal protein bL35 family.

The sequence is that of Large ribosomal subunit protein bL35 from Anaplasma phagocytophilum (strain HZ).